The sequence spans 483 residues: Xylulose kinase (483 aa).

Position 77-78 (77-78) interacts with substrate; sequence MH. Aspartate 233 acts as the Proton acceptor in catalysis.

Belongs to the FGGY kinase family.

It catalyses the reaction D-xylulose + ATP = D-xylulose 5-phosphate + ADP + H(+). Catalyzes the phosphorylation of D-xylulose to D-xylulose 5-phosphate. The chain is Xylulose kinase from Klebsiella pneumoniae.